Here is a 308-residue protein sequence, read N- to C-terminus: N-acetylmuramic acid 6-phosphate etherase (308 aa).

The SIS domain occupies 59–222; it reads TAERLRHGGR…STGVMVKLGK (164 aa). Glu87 acts as the Proton donor in catalysis. Glu118 is a catalytic residue.

Belongs to the GCKR-like family. MurNAc-6-P etherase subfamily. Homodimer.

The catalysed reaction is N-acetyl-D-muramate 6-phosphate + H2O = N-acetyl-D-glucosamine 6-phosphate + (R)-lactate. It functions in the pathway amino-sugar metabolism; N-acetylmuramate degradation. Functionally, specifically catalyzes the cleavage of the D-lactyl ether substituent of MurNAc 6-phosphate, producing GlcNAc 6-phosphate and D-lactate. This chain is N-acetylmuramic acid 6-phosphate etherase, found in Nostoc punctiforme (strain ATCC 29133 / PCC 73102).